Reading from the N-terminus, the 413-residue chain is Lysosomal phospholipase A and acyltransferase (413 aa).

The N-terminal stretch at 1–33 (MDRHLCICREIQLRSGLLFPFLLLMMLADLALP) is a signal peptide. Asp46 is a binding site for substrate. Residues Cys65 and Cys89 are joined by a disulfide bond. Asn99 carries N-linked (GlcNAc...) asparagine glycosylation. The Acyl-ester intermediate role is filled by Ser198. Zn(2+) is bound at residue Ser198. Met199 provides a ligand contact to substrate. N-linked (GlcNAc...) asparagine glycosylation is found at Asn273 and Asn289. Zn(2+) is bound at residue Cys355. Active-site charge relay system residues include Asp360 and His392. Zn(2+) is bound at residue His392. The N-linked (GlcNAc...) asparagine glycan is linked to Asn398.

Belongs to the AB hydrolase superfamily. Lipase family. N-glycosylated. N-glycosylation is important for maturation of the enzyme and normal subcellular location. Detected in alveolar macrophages (at protein level). Widely expressed. Expressed at highest levels in alveolar macrophages.

The protein localises to the lysosome. It is found in the secreted. It localises to the membrane. The catalysed reaction is a 1,2-diacyl-sn-glycero-3-phosphocholine + H2O = a 2-acyl-sn-glycero-3-phosphocholine + a fatty acid + H(+). It catalyses the reaction 1,2-dihexadecanoyl-sn-glycero-3-phosphocholine + H2O = 2-hexadecanoyl-sn-glycero-3-phosphocholine + hexadecanoate + H(+). The enzyme catalyses 1-hexadecanoyl-2-(9Z-octadecenoyl)-sn-glycero-3-phosphocholine + H2O = 2-(9Z-octadecenoyl)-sn-glycero-3-phosphocholine + hexadecanoate + H(+). It carries out the reaction 1,2-di-(9Z-octadecenoyl)-sn-glycero-3-phosphocholine + H2O = 2-(9Z-octadecenoyl)-sn-glycero-3-phosphocholine + (9Z)-octadecenoate + H(+). The catalysed reaction is 1-hexadecanoyl-2-glutaroyl-sn-glycero-3-phosphocholine + H2O = 2-glutaroyl-sn-glycero-3-phosphocholine + hexadecanoate + H(+). It catalyses the reaction 1-hexadecanoyl-2-nonadioyl-sn-glycero-3-phosphocholine + H2O = 2-nonadioyl-sn-glycero-3-phosphocholine + hexadecanoate + H(+). The enzyme catalyses 1-hexadecanoyl-2-(5-oxopentanoyl)-sn-glycero-3-phosphocholine + H2O = 2-(5-oxopentanoyl)-sn-glycero-3-phosphocholine + hexadecanoate + H(+). It carries out the reaction 1-hexadecanoyl-2-(9-oxononanoyl)-sn-glycero-3-phosphocholine + H2O = 2-(9-oxononanoyl)-sn-glycero-3-phosphocholine + hexadecanoate + H(+). The catalysed reaction is a 1,2-diacyl-sn-glycero-3-phosphocholine + H2O = a 1-acyl-sn-glycero-3-phosphocholine + a fatty acid + H(+). It catalyses the reaction 1,2-dihexadecanoyl-sn-glycero-3-phosphocholine + H2O = 1-hexadecanoyl-sn-glycero-3-phosphocholine + hexadecanoate + H(+). The enzyme catalyses 1-hexadecanoyl-2-(9Z-octadecenoyl)-sn-glycero-3-phosphocholine + H2O = 1-hexadecanoyl-sn-glycero-3-phosphocholine + (9Z)-octadecenoate + H(+). It carries out the reaction 1,2-di-(9Z-octadecenoyl)-sn-glycero-3-phosphocholine + H2O = 1-(9Z-octadecenoyl)-sn-glycero-3-phosphocholine + (9Z)-octadecenoate + H(+). The catalysed reaction is a 1-acyl-sn-glycero-3-phosphocholine + H2O = sn-glycerol 3-phosphocholine + a fatty acid + H(+). It catalyses the reaction 1-hexadecanoyl-sn-glycero-3-phosphocholine + H2O = sn-glycerol 3-phosphocholine + hexadecanoate + H(+). The enzyme catalyses N-(acetyl)-sphing-4-enine + a 1,2-diacyl-sn-glycero-3-phosphoethanolamine = 1-O-acyl-N-(acetyl)-sphing-4-enine + a 2-acyl-sn-glycero-3-phosphoethanolamine. It carries out the reaction 1-hexadecanoyl-2-(9Z-octadecenoyl)-sn-glycero-3-phosphoethanolamine + N-(acetyl)-sphing-4-enine = 2-(9Z-octadecenoyl)-sn-glycero-3-phosphoethanolamine + 1-hexadecanoyl-N-(acetyl)-sphing-4-enine. The catalysed reaction is 1-hexadecanoyl-2-(9Z,12Z-octadecadienoyl)-sn-glycero-3-phosphoethanolamine + N-(acetyl)-sphing-4-enine = 2-(9Z,12Z)-octadecadienoyl-sn-glycero-3-phosphoethanolamine + 1-hexadecanoyl-N-(acetyl)-sphing-4-enine. It catalyses the reaction 1-hexadecanoyl-2-(5Z,8Z,11Z,14Z-eicosatetraenoyl)-sn-glycero-3-phosphoethanolamine + N-(acetyl)-sphing-4-enine = 2-(5Z,8Z,11Z,14Z)-eicosatetraenoyl-sn-glycero-3-phosphoethanolamine + 1-hexadecanoyl-N-(acetyl)-sphing-4-enine. The enzyme catalyses N-(acetyl)-sphing-4-enine + a 1,2-diacyl-sn-glycero-3-phosphoethanolamine = 1-O-acyl-N-(acetyl)-sphing-4-enine + a 1-acyl-sn-glycero-3-phosphoethanolamine. It carries out the reaction 1-hexadecanoyl-2-(9Z-octadecenoyl)-sn-glycero-3-phosphoethanolamine + N-(acetyl)-sphing-4-enine = 1-(9Z-octadecenoyl)-N-(acetyl)-sphing-4-enine + 1-hexadecanoyl-sn-glycero-3-phosphoethanolamine. The catalysed reaction is 1-hexadecanoyl-2-(9Z,12Z-octadecadienoyl)-sn-glycero-3-phosphoethanolamine + N-(acetyl)-sphing-4-enine = 1-(9Z,12Z-octadecadienoyl)-N-acetylsphing-4-enine + 1-hexadecanoyl-sn-glycero-3-phosphoethanolamine. It catalyses the reaction 1-hexadecanoyl-2-(5Z,8Z,11Z,14Z-eicosatetraenoyl)-sn-glycero-3-phosphoethanolamine + N-(acetyl)-sphing-4-enine = 1-(5Z,8Z,11Z,14Z)-eicosatetraenoyl-N-(acetyl)-sphing-4-enine + 1-hexadecanoyl-sn-glycero-3-phosphoethanolamine. The enzyme catalyses N-(acetyl)-sphing-4-enine + a 1,2-diacyl-sn-glycero-3-phosphocholine = 1-O-acyl-N-(acetyl)-sphing-4-enine + a 2-acyl-sn-glycero-3-phosphocholine. It carries out the reaction 1-hexadecanoyl-2-(9Z-octadecenoyl)-sn-glycero-3-phosphocholine + N-(acetyl)-sphing-4-enine = 1-hexadecanoyl-N-(acetyl)-sphing-4-enine + 2-(9Z-octadecenoyl)-sn-glycero-3-phosphocholine. The catalysed reaction is 1-hexadecanoyl-2-(9Z,12Z-octadecadienoyl)-sn-glycero-3-phosphocholine + N-(acetyl)-sphing-4-enine = 2-(9Z,12Z-octadecadienoyl)-sn-glycero-3-phosphocholine + 1-hexadecanoyl-N-(acetyl)-sphing-4-enine. It catalyses the reaction 1-hexadecanoyl-2-(5Z,8Z,11Z,14Z-eicosatetraenoyl)-sn-glycero-3-phosphocholine + N-(acetyl)-sphing-4-enine = 1-hexadecanoyl-N-(acetyl)-sphing-4-enine + 2-(5Z,8Z,11Z,14Z)-eicosatetraenoyl-sn-glycero-3-phosphocholine. The enzyme catalyses 1-hexadecanoyl-2-(4Z,7Z,10Z,13Z,16Z,19Z-docosahexaenoyl)-sn-glycero-3-phosphocholine + N-(acetyl)-sphing-4-enine = 2-(4Z,7Z,10Z,13Z,16Z,19Z-docosahexaenoyl)-sn-glycero-3-phosphocholine + 1-hexadecanoyl-N-(acetyl)-sphing-4-enine. It carries out the reaction 1-hexadecanoyl-2-nonadioyl-sn-glycero-3-phosphocholine + N-(acetyl)-sphing-4-enine = 2-nonadioyl-sn-glycero-3-phosphocholine + 1-hexadecanoyl-N-(acetyl)-sphing-4-enine. The catalysed reaction is 1-octadecanoyl-2-(9Z-octadecenoyl)-sn-glycero-3-phosphocholine + N-(acetyl)-sphing-4-enine = 1-octadecanoyl-N-(acetyl)-sphing-4-enine + 2-(9Z-octadecenoyl)-sn-glycero-3-phosphocholine. It catalyses the reaction 1-(9Z)-octadecenoyl-2-octadecanoyl-sn-glycero-3-phosphocholine + N-(acetyl)-sphing-4-enine = 2-octadecanoyl-sn-glycero-3-phosphocholine + 1-(9Z-octadecenoyl)-N-(acetyl)-sphing-4-enine. The enzyme catalyses 1-octadecanoyl-2-(5Z,8Z,11Z,14Z-eicosatetraenoyl)-sn-glycero-3-phosphocholine + N-(acetyl)-sphing-4-enine = 1-octadecanoyl-N-(acetyl)-sphing-4-enine + 2-(5Z,8Z,11Z,14Z)-eicosatetraenoyl-sn-glycero-3-phosphocholine. It carries out the reaction 1-(9Z-octadecenoyl)-2-hexadecanoyl-sn-glycero-3-phosphocholine + N-(acetyl)-sphing-4-enine = 1-(9Z-octadecenoyl)-N-(acetyl)-sphing-4-enine + 2-hexadecanoyl-sn-glycero-3-phosphocholine. The catalysed reaction is N-(acetyl)-sphing-4-enine + a 1,2-diacyl-sn-glycero-3-phosphocholine = 1-O-acyl-N-(acetyl)-sphing-4-enine + a 1-acyl-sn-glycero-3-phosphocholine. It catalyses the reaction 1-hexadecanoyl-2-(9Z-octadecenoyl)-sn-glycero-3-phosphocholine + N-(acetyl)-sphing-4-enine = 1-(9Z-octadecenoyl)-N-(acetyl)-sphing-4-enine + 1-hexadecanoyl-sn-glycero-3-phosphocholine. The enzyme catalyses 1-hexadecanoyl-2-(9Z,12Z-octadecadienoyl)-sn-glycero-3-phosphocholine + N-(acetyl)-sphing-4-enine = 1-(9Z,12Z-octadecadienoyl)-N-acetylsphing-4-enine + 1-hexadecanoyl-sn-glycero-3-phosphocholine. It carries out the reaction 1-hexadecanoyl-2-(5Z,8Z,11Z,14Z-eicosatetraenoyl)-sn-glycero-3-phosphocholine + N-(acetyl)-sphing-4-enine = 1-(5Z,8Z,11Z,14Z)-eicosatetraenoyl-N-(acetyl)-sphing-4-enine + 1-hexadecanoyl-sn-glycero-3-phosphocholine. The catalysed reaction is 1-hexadecanoyl-2-(4Z,7Z,10Z,13Z,16Z,19Z-docosahexaenoyl)-sn-glycero-3-phosphocholine + N-(acetyl)-sphing-4-enine = 1-(4Z,7Z,10Z,13Z,16Z,19Z-docosahexaenoyl)-N-(acetyl)-sphing-4-enine + 1-hexadecanoyl-sn-glycero-3-phosphocholine. It catalyses the reaction 1-octadecanoyl-2-(9Z-octadecenoyl)-sn-glycero-3-phosphocholine + N-(acetyl)-sphing-4-enine = 1-(9Z-octadecenoyl)-N-(acetyl)-sphing-4-enine + 1-octadecanoyl-sn-glycero-3-phosphocholine. The enzyme catalyses 1-octadecanoyl-2-(9Z,12Z)-octadecadienoyl-sn-glycero-3-phosphocholine + N-(acetyl)-sphing-4-enine = 1-(9Z,12Z-octadecadienoyl)-N-acetylsphing-4-enine + 1-octadecanoyl-sn-glycero-3-phosphocholine. It carries out the reaction 1-(9Z-octadecenoyl)-2-hexadecanoyl-sn-glycero-3-phosphocholine + N-(acetyl)-sphing-4-enine = 1-hexadecanoyl-N-(acetyl)-sphing-4-enine + 1-(9Z-octadecenoyl)-sn-glycero-3-phosphocholine. The catalysed reaction is 1-(9Z)-octadecenoyl-2-octadecanoyl-sn-glycero-3-phosphocholine + N-(acetyl)-sphing-4-enine = 1-octadecanoyl-N-(acetyl)-sphing-4-enine + 1-(9Z-octadecenoyl)-sn-glycero-3-phosphocholine. It catalyses the reaction 1,2-di-(9Z-octadecenoyl)-sn-glycero-3-phosphocholine + N-(acetyl)-sphing-4-enine = 1-(9Z-octadecenoyl)-N-(acetyl)-sphing-4-enine + 1-(9Z-octadecenoyl)-sn-glycero-3-phosphocholine. The enzyme catalyses 1-octadecanoyl-2-(5Z,8Z,11Z,14Z-eicosatetraenoyl)-sn-glycero-3-phosphocholine + N-(acetyl)-sphing-4-enine = 1-(5Z,8Z,11Z,14Z)-eicosatetraenoyl-N-(acetyl)-sphing-4-enine + 1-octadecanoyl-sn-glycero-3-phosphocholine. It carries out the reaction a 1,2-diacyl-sn-glycero-3-phospho-L-serine + N-(acetyl)-sphing-4-enine = a 2-acyl-sn-glycero-3-phospho-L-serine + 1-O-acyl-N-(acetyl)-sphing-4-enine. The catalysed reaction is 1-octadecanoyl-2-(9Z-octadecenoyl)-sn-glycero-3-phospho-L-serine + N-(acetyl)-sphing-4-enine = 2-(9Z-octadecenoyl)-sn-glycero-3-phospho-L-serine + 1-octadecanoyl-N-(acetyl)-sphing-4-enine. It catalyses the reaction a 1,2-diacyl-sn-glycero-3-phospho-L-serine + N-(acetyl)-sphing-4-enine = 1-O-acyl-N-(acetyl)-sphing-4-enine + a 1-acyl-sn-glycero-3-phospho-L-serine. The enzyme catalyses 1-octadecanoyl-2-(9Z-octadecenoyl)-sn-glycero-3-phospho-L-serine + N-(acetyl)-sphing-4-enine = 1-octadecanoyl-sn-glycero-3-phosphoserine + 1-(9Z-octadecenoyl)-N-(acetyl)-sphing-4-enine. It carries out the reaction a 1,2-diacyl-sn-glycero-3-phospho-(1'-sn-glycerol) + N-(acetyl)-sphing-4-enine = 2-acyl-sn-glycero-3-phospho-(1'-sn-glycerol) + 1-O-acyl-N-(acetyl)-sphing-4-enine. The catalysed reaction is 1-octadecanoyl-2-(9Z-octadecenoyl)-sn-glycero-3-phospho-(1'-sn-glycerol) + N-(acetyl)-sphing-4-enine = 2-(9Z-octadecenoyl)-sn-glycero-3-phospho-(1'-sn-glycerol) + 1-octadecanoyl-N-(acetyl)-sphing-4-enine. It catalyses the reaction a 1,2-diacyl-sn-glycero-3-phospho-(1'-sn-glycerol) + N-(acetyl)-sphing-4-enine = 1-O-acyl-N-(acetyl)-sphing-4-enine + 1-acyl-sn-glycero-3-phospho-(1'-sn-glycerol). The enzyme catalyses 1-octadecanoyl-2-(9Z-octadecenoyl)-sn-glycero-3-phospho-(1'-sn-glycerol) + N-(acetyl)-sphing-4-enine = 1-octadecanoyl-sn-glycero-3-phospho-(1'-sn-glycerol) + 1-(9Z-octadecenoyl)-N-(acetyl)-sphing-4-enine. It carries out the reaction an N-acylethanolamine + a 1,2-diacyl-sn-glycero-3-phosphocholine = 2-(acylamino)ethyl fatty acid + a 2-acyl-sn-glycero-3-phosphocholine. The catalysed reaction is an N-acylethanolamine + a 1,2-diacyl-sn-glycero-3-phosphocholine = 2-(acylamino)ethyl fatty acid + a 1-acyl-sn-glycero-3-phosphocholine. It catalyses the reaction N-(5Z,8Z,11Z,14Z-eicosatetraenoyl)-ethanolamine + 1,2-di-(9Z-octadecenoyl)-sn-glycero-3-phosphocholine = 2-[(5Z,8Z,11Z,14Z)-eicosatetraenoylamino]ethyl (9Z)-octadecenoate + (9Z-octadecenoyl)-sn-glycero-3-phosphocholine. The enzyme catalyses N-(9Z-octadecenoyl) ethanolamine + 1,2-di-(9Z-octadecenoyl)-sn-glycero-3-phosphocholine = 2-[(9Z)-octadecenoylamino]ethyl (9Z)-octadecenoate + (9Z-octadecenoyl)-sn-glycero-3-phosphocholine. It carries out the reaction a 3-acyl-sn-glycerol + a 1,2-diacyl-sn-glycero-3-phosphocholine = a 1,3-diacylglycerol + a 1-acyl-sn-glycero-3-phosphocholine. The catalysed reaction is a 3-acyl-sn-glycerol + a 1,2-diacyl-sn-glycero-3-phosphocholine = a 1,3-diacylglycerol + a 2-acyl-sn-glycero-3-phosphocholine. It catalyses the reaction 3-(9Z-octadecenoyl)-sn-glycerol + 1,2-di-(9Z-octadecenoyl)-sn-glycero-3-phosphocholine = 1,3-di-(9Z-octadecenoyl)-glycerol + (9Z-octadecenoyl)-sn-glycero-3-phosphocholine. The enzyme catalyses 3-hexadecanoyl-sn-glycerol + 1,2-di-(9Z-octadecenoyl)-sn-glycero-3-phosphocholine = 1-(9Z)-octadecenoyl-3-hexadecanoyl-sn-glycerol + (9Z-octadecenoyl)-sn-glycero-3-phosphocholine. It carries out the reaction a 1-acyl-sn-glycerol + a 1,2-diacyl-sn-glycero-3-phosphocholine = a 1,3-diacylglycerol + a 2-acyl-sn-glycero-3-phosphocholine. The catalysed reaction is a 1-acyl-sn-glycerol + a 1,2-diacyl-sn-glycero-3-phosphocholine = a 1,3-diacylglycerol + a 1-acyl-sn-glycero-3-phosphocholine. It catalyses the reaction 1-(9Z-octadecenoyl)-sn-glycerol + 1,2-di-(9Z-octadecenoyl)-sn-glycero-3-phosphocholine = 1,3-di-(9Z-octadecenoyl)-glycerol + (9Z-octadecenoyl)-sn-glycero-3-phosphocholine. The enzyme catalyses 1-hexadecanoyl-sn-glycerol + 1,2-di-(9Z-octadecenoyl)-sn-glycero-3-phosphocholine = 1-hexadecanoyl-3-(9Z)-octadecenoyl-sn-glycerol + (9Z-octadecenoyl)-sn-glycero-3-phosphocholine. It carries out the reaction a 2-acylglycerol + a 1,2-diacyl-sn-glycero-3-phosphocholine = a 1,2-diacylglycerol + a 2-acyl-sn-glycero-3-phosphocholine. The catalysed reaction is a 2-acylglycerol + a 1,2-diacyl-sn-glycero-3-phosphocholine = a 1,2-diacylglycerol + a 1-acyl-sn-glycero-3-phosphocholine. It catalyses the reaction 2-hexadecanoylglycerol + 1,2-di-(9Z-octadecenoyl)-sn-glycero-3-phosphocholine = 1-(9Z)-octadecenoyl-2-hexadecanoylglycerol + (9Z-octadecenoyl)-sn-glycero-3-phosphocholine. The enzyme catalyses 1-O-alkylglycerol + a 1,2-diacyl-sn-glycero-3-phosphocholine = 1-O-alkyl-3-acylglycerol + a 1-acyl-sn-glycero-3-phosphocholine. It carries out the reaction 1-O-alkylglycerol + a 1,2-diacyl-sn-glycero-3-phosphocholine = 1-O-alkyl-3-acylglycerol + a 2-acyl-sn-glycero-3-phosphocholine. The catalysed reaction is 1-O-hexadecylglycerol + 1,2-di-(9Z-octadecenoyl)-sn-glycero-3-phosphocholine = 1-O-hexadecyl-3-(9Z)-octadecenoylglycerol + (9Z-octadecenoyl)-sn-glycero-3-phosphocholine. It catalyses the reaction 1-O-alkyl-2-acyl-sn-glycerol + a 1,2-diacyl-sn-glycero-3-phosphocholine = 1-O-alkyl-2,3-diacyl-sn-glycerol + a 2-acyl-sn-glycero-3-phosphocholine. The enzyme catalyses 1-O-alkyl-2-acyl-sn-glycerol + a 1,2-diacyl-sn-glycero-3-phosphocholine = 1-O-alkyl-2,3-diacyl-sn-glycerol + a 1-acyl-sn-glycero-3-phosphocholine. It carries out the reaction 1-O-hexadecyl-2-acetyl-sn-glycerol + 1,2-di-(9Z-octadecenoyl)-sn-glycero-3-phosphocholine = 1-O-hexadecyl-2-acetyl-3-(9Z)-octadecenoyl-sn-glycerol + (9Z-octadecenoyl)-sn-glycero-3-phosphocholine. The catalysed reaction is 1-O-hexadecyl-2-O-methyl-sn-glycerol + 1,2-di-(9Z-octadecenoyl)-sn-glycero-3-phosphocholine = 1-O-hexadecyl-2-O-methyl-3-(9Z)-octadecenoyl-sn-glycerol + (9Z-octadecenoyl)-sn-glycero-3-phosphocholine. It catalyses the reaction a 1,2-diacyl-sn-glycero-3-phosphoethanolamine + H2O = a 1-acyl-sn-glycero-3-phosphoethanolamine + a fatty acid + H(+). The enzyme catalyses 1-acyl-2-(5Z,8Z,11Z,14Z)-eicosatetraenoyl-sn-glycero-3-phosphoethanolamine + H2O = a 1-acyl-sn-glycero-3-phosphoethanolamine + (5Z,8Z,11Z,14Z)-eicosatetraenoate + H(+). It carries out the reaction a 1,2-diacyl-sn-glycero-3-phospho-(1'-sn-glycerol) + H2O = 1-acyl-sn-glycero-3-phospho-(1'-sn-glycerol) + a fatty acid + H(+). The catalysed reaction is 1-hexadecanoyl-2-(9Z-octadecenoyl)-sn-glycero-3-phospho-(1'-sn-glycerol) + H2O = 1-hexadecanoyl-sn-glycero-3-phospho-(1'-sn-glycerol) + (9Z)-octadecenoate + H(+). It catalyses the reaction a 1,2-diacyl-sn-glycero-3-phospho-(1'-sn-glycerol) + H2O = 2-acyl-sn-glycero-3-phospho-(1'-sn-glycerol) + a fatty acid + H(+). The enzyme catalyses 1-hexadecanoyl-2-(9Z-octadecenoyl)-sn-glycero-3-phospho-(1'-sn-glycerol) + H2O = 2-(9Z-octadecenoyl)-sn-glycero-3-phospho-(1'-sn-glycerol) + hexadecanoate + H(+). With respect to regulation, transacylase activity is inhibited by MJ33. In terms of biological role, has dual calcium-independent phospholipase and O-acyltransferase activities with a potential role in glycerophospholipid homeostasis and remodeling of acyl groups of lipophilic alcohols present in acidic cellular compartments. Catalyzes hydrolysis of the ester bond of the fatty acyl group attached at sn-1 or sn-2 position of phospholipids (phospholipase A1 or A2 activity) and transfer it to the hydroxyl group at the first carbon of lipophilic alcohols (O-acyltransferase activity). Among preferred fatty acyl donors are phosphatidylcholines, phosphatidylethanolamines, phosphatidylglycerols and phosphatidylserines. Favors sn-2 over sn-1 deacylation of unsaturated fatty acyl groups of phosphatidylcholines, phosphatidylethanolamines, and phosphatidylglycerols. Among preferred fatty acyl acceptors are natural lipophilic alcohols including short-chain ceramide N-acetyl-sphingosine (C2 ceramide), alkylacylglycerols, monoacylglycerols, and acylethanolamides such as anandamide and oleoylethanolamide. Selectively hydrolyzes the sn-1 fatty acyl group of truncated oxidized phospholipids and may play a role in detoxification of reactive oxidized phospholipids during oxidative stress. Required for normal phospholipid degradation in alveolar macrophages with potential implications in the clearance of pulmonary surfactant, which is mainly composed of dipalmitoylphosphatidylcholine (1,2-dihexadecanoyl-sn-glycero-3-phosphocholine). Involved in the first step of bis(monoacylglycero)phosphate (BMP) de novo synthesis from phosphatidylglycerol (1,2-diacyl-sn-glycero-3-phospho-(1'-sn-glycerol), PG). BMP is an important player in cargo sorting and degradation, regulation of cellular cholesterol levels and intercellular communication. At neutral pH, hydrolyzes the sn-1 fatty acyl group of the lysophosphatidylcholines. The polypeptide is Lysosomal phospholipase A and acyltransferase (Pla2g15) (Rattus norvegicus (Rat)).